Consider the following 864-residue polypeptide: Dynamin-1 (864 aa).

A Dynamin-type G domain is found at 28-294; it reads DLDLPQIAVV…LTNHIRDTLP (267 aa). The tract at residues 38–45 is G1 motif; that stretch reads GGQSAGKS. The GDP site is built by Ser41, Gly43, Lys44, Ser45, Ser46, Arg59, and Gly60. The interval 64–66 is G2 motif; the sequence is VTR. Tyr80 is modified (phosphotyrosine). 3'-nitrotyrosine; alternate is present on Tyr125. The residue at position 125 (Tyr125) is a Phosphotyrosine; alternate. The G3 motif stretch occupies residues 136 to 139; that stretch reads DLPG. Residues 205–208 are G4 motif; it reads TKLD. Lys206, Asp208, Asp211, Asn236, Arg237, and Gln239 together coordinate GDP. Positions 235-238 are G5 motif; that stretch reads VNRS. Residues Ser306 and Ser347 each carry the phosphoserine modification. At Tyr354 the chain carries Phosphotyrosine. Ser512 is subject to Phosphoserine. In terms of domain architecture, PH spans 519-625; sequence LVIRKGWLTI…WKASFLRAGV (107 aa). In terms of domain architecture, GED spans 659 to 750; sequence VETIRNLVDS…IIGDINTTTV (92 aa). Positions 767–864 are disordered; that stretch reads SVPAGRRSPT…PESPRPPFDL (98 aa). A Phosphoserine; by CDK5 modification is found at Ser774. Ser778 bears the Phosphoserine mark. The residue at position 796 (Arg796) is an Omega-N-methylarginine. The residue at position 822 (Ser822) is a Phosphoserine. A compositionally biased stretch (pro residues) spans 825 to 843; that stretch reads PFGPPPQVPSRPNRAPPGV. 2 positions are modified to phosphoserine: Ser851 and Ser857.

It belongs to the TRAFAC class dynamin-like GTPase superfamily. Dynamin/Fzo/YdjA family. In terms of assembly, homodimer; homodimerization is mediated by the dynamin-type G domain which promotes assembly-stimulated GTPase activity. Homo-tetramer formed from two dimers in the absence of lipid. Oligomerizes into a helical polymer that self-assembles around the vesicle membrane, when associated to the menbrane through lipid binding. Interacts (via C-terminal proline-rich domain (PRD)) with SNX9 (via SH3 domain); this interaction allows regulation of DNM1 self-assembly during late stages of endocytic vesicle formation and supports DNM1's early functions in accelerating clathrin-coated pits (CCPs) maturation in non neuronals cell. Interacts (via C-terminal proline-rich domain (PRD)) with MYO1E (via SH3 domain); this interaction regulates receptor-mediated endocytosis. Interacts with SNX33 (via SH3 domain); this interaction decreases DNM1-dependent endocytosis. Interacts with DIAPH1. Interacts with GRB2 (via SH3 domain); this interaction mediates disassembly of DNM1 polymers, therefore modulates self-assembly. Forms a complex with BIN1 (via SH3 domain) and SH3GL2 (via SH3 domain). Forms a complex with SH3GL2 (via SH3 domain) and AMPH (via SH3 domain). Forms a complex with SH3GL2 (via SH3 domain) and SYNJ1. Interacts with AMPH. Interacts (via C-terminal proline-rich domain (PRD)) with SYT1; this interaction facilitates vesicle fission during clathrin-mediated endocytosis (CME). Interacts (via C-terminal proline-rich domain (PRD)) with PLCG1 (via SH3 domain); this interaction stimulates the release of GDP from DNM1 and enhances DNM1-dependent endocytosis. Interacts with SNPH; this interaction inhibits the binding of DNM1 to AMPH and DNM1-receptor-mediated endocytosis. Interacts with CAV1. Interacts with SH3GLB1 (via SH3 domain). Interacts with PACSIN1 (via SH3 domain), PACSIN2 (via SH3 domain) and PACSIN3 (via SH3 domain). Interacts with UNC119; this interaction decreases DNM1's GTPase activity and affects DNM1's interaction with AMPH. Interacts (GTP-bound form) with DNAJC6; this interaction allows clathrin-coated vesicle (CCV) formation at the plasma membrane. In terms of processing, phosphorylation at Ser-774 by GSK3B/GSK3-beta leads to inactivation of receptor-mediated endocytosis in non-neuronal cells. Dephosphorylation at Ser-774, through the EGFR downstream signaling, leads to activation and regulates early stages of clathrin-mediated endocytosis (CME). Phosphorylated by CDK5 leading to synaptic vesicle endocytosis (SVE) activation. In terms of tissue distribution, brain-specific (peripheral sensory neurons).

The protein resides in the cytoplasmic vesicle. The protein localises to the clathrin-coated vesicle. It is found in the golgi apparatus. It localises to the cell membrane. Its subcellular location is the membrane. The protein resides in the clathrin-coated pit. The protein localises to the presynapse. It is found in the secretory vesicle. It localises to the chromaffin granule. The enzyme catalyses GTP + H2O = GDP + phosphate + H(+). Functionally, catalyzes the hydrolysis of GTP and utilizes this energy to mediate vesicle scission and participates in many forms of endocytosis, such as clathrin-mediated endocytosis or synaptic vesicle endocytosis as well as rapid endocytosis (RE). Associates to the membrane, through lipid binding, and self-assembles into rings and stacks of interconnected rings through oligomerization to form a helical polymer around the vesicle membrane leading to constriction of invaginated coated pits around their necks. Self-assembly of the helical polymer induces membrane tubules narrowing until the polymer reaches a length sufficient to trigger GTP hydrolysis. Depending on the curvature imposed on the tubules, membrane detachment from the helical polymer upon GTP hydrolysis can cause spontaneous hemifission followed by complete fission. May play a role in regulating early stages of clathrin-mediated endocytosis in non-neuronal cells through its activation by dephosphorylation via the signaling downstream of EGFR. Controls vesicle size at a step before fission, during formation of membrane pits, at hippocampal synapses. Controls plastic adaptation of the synaptic vesicle recycling machinery to high levels of activity. Mediates rapid endocytosis (RE), a Ca(2+)-dependent and clathrin- and K(+)-independent process in chromaffin cells. Microtubule-associated force-producing protein involved in producing microtubule bundles and able to bind and hydrolyze GTP. Through its interaction with DNAJC6, acts during the early steps of clathrin-coated vesicle (CCV) formation. The chain is Dynamin-1 (Dnm1) from Rattus norvegicus (Rat).